A 334-amino-acid chain; its full sequence is Holliday junction branch migration complex subunit RuvB (334 aa).

The large ATPase domain (RuvB-L) stretch occupies residues 4-184; the sequence is ADRLIQPQLQ…FGIPLRLEFY (181 aa). ATP contacts are provided by residues Arg-24, Gly-65, Lys-68, Thr-69, Thr-70, 131-133, Arg-174, Tyr-184, and Arg-221; that span reads EDY. Residue Thr-69 participates in Mg(2+) binding. The tract at residues 185 to 255 is small ATPAse domain (RuvB-S); sequence NIKDLSTIVT…VADHALDLLD (71 aa). Residues 258 to 334 form a head domain (RuvB-H) region; the sequence is NEGFDYMDRK…YQHFQLIKPE (77 aa). Positions 294, 313, and 318 each coordinate DNA.

This sequence belongs to the RuvB family. As to quaternary structure, homohexamer. Forms an RuvA(8)-RuvB(12)-Holliday junction (HJ) complex. HJ DNA is sandwiched between 2 RuvA tetramers; dsDNA enters through RuvA and exits via RuvB. An RuvB hexamer assembles on each DNA strand where it exits the tetramer. Each RuvB hexamer is contacted by two RuvA subunits (via domain III) on 2 adjacent RuvB subunits; this complex drives branch migration. In the full resolvosome a probable DNA-RuvA(4)-RuvB(12)-RuvC(2) complex forms which resolves the HJ.

Its subcellular location is the cytoplasm. The enzyme catalyses ATP + H2O = ADP + phosphate + H(+). In terms of biological role, the RuvA-RuvB-RuvC complex processes Holliday junction (HJ) DNA during genetic recombination and DNA repair, while the RuvA-RuvB complex plays an important role in the rescue of blocked DNA replication forks via replication fork reversal (RFR). RuvA specifically binds to HJ cruciform DNA, conferring on it an open structure. The RuvB hexamer acts as an ATP-dependent pump, pulling dsDNA into and through the RuvAB complex. RuvB forms 2 homohexamers on either side of HJ DNA bound by 1 or 2 RuvA tetramers; 4 subunits per hexamer contact DNA at a time. Coordinated motions by a converter formed by DNA-disengaged RuvB subunits stimulates ATP hydrolysis and nucleotide exchange. Immobilization of the converter enables RuvB to convert the ATP-contained energy into a lever motion, pulling 2 nucleotides of DNA out of the RuvA tetramer per ATP hydrolyzed, thus driving DNA branch migration. The RuvB motors rotate together with the DNA substrate, which together with the progressing nucleotide cycle form the mechanistic basis for DNA recombination by continuous HJ branch migration. Branch migration allows RuvC to scan DNA until it finds its consensus sequence, where it cleaves and resolves cruciform DNA. In Shewanella sp. (strain W3-18-1), this protein is Holliday junction branch migration complex subunit RuvB.